A 137-amino-acid chain; its full sequence is Nucleoside diphosphate kinase (137 aa).

ATP-binding residues include K10, F59, R87, T93, R104, and N114. The active-site Pros-phosphohistidine intermediate is the H117.

Belongs to the NDK family. In terms of assembly, homotetramer. Mg(2+) serves as cofactor.

The protein localises to the cytoplasm. The enzyme catalyses a 2'-deoxyribonucleoside 5'-diphosphate + ATP = a 2'-deoxyribonucleoside 5'-triphosphate + ADP. It carries out the reaction a ribonucleoside 5'-diphosphate + ATP = a ribonucleoside 5'-triphosphate + ADP. Major role in the synthesis of nucleoside triphosphates other than ATP. The ATP gamma phosphate is transferred to the NDP beta phosphate via a ping-pong mechanism, using a phosphorylated active-site intermediate. The chain is Nucleoside diphosphate kinase from Streptomyces coelicolor (strain ATCC BAA-471 / A3(2) / M145).